A 232-amino-acid chain; its full sequence is Phosphatidylserine decarboxylase proenzyme (232 aa).

Ser-190 (schiff-base intermediate with substrate; via pyruvic acid) is an active-site residue. Ser-190 carries the pyruvic acid (Ser); by autocatalysis modification.

It belongs to the phosphatidylserine decarboxylase family. PSD-A subfamily. Heterodimer of a large membrane-associated beta subunit and a small pyruvoyl-containing alpha subunit. Pyruvate is required as a cofactor. Post-translationally, is synthesized initially as an inactive proenzyme. Formation of the active enzyme involves a self-maturation process in which the active site pyruvoyl group is generated from an internal serine residue via an autocatalytic post-translational modification. Two non-identical subunits are generated from the proenzyme in this reaction, and the pyruvate is formed at the N-terminus of the alpha chain, which is derived from the carboxyl end of the proenzyme. The post-translation cleavage follows an unusual pathway, termed non-hydrolytic serinolysis, in which the side chain hydroxyl group of the serine supplies its oxygen atom to form the C-terminus of the beta chain, while the remainder of the serine residue undergoes an oxidative deamination to produce ammonia and the pyruvoyl prosthetic group on the alpha chain.

The protein resides in the cell membrane. It catalyses the reaction a 1,2-diacyl-sn-glycero-3-phospho-L-serine + H(+) = a 1,2-diacyl-sn-glycero-3-phosphoethanolamine + CO2. Its pathway is phospholipid metabolism; phosphatidylethanolamine biosynthesis; phosphatidylethanolamine from CDP-diacylglycerol: step 2/2. In terms of biological role, catalyzes the formation of phosphatidylethanolamine (PtdEtn) from phosphatidylserine (PtdSer). The polypeptide is Phosphatidylserine decarboxylase proenzyme (Rhodopseudomonas palustris (strain BisB5)).